The primary structure comprises 362 residues: Carbamoyl phosphate synthase small chain (362 aa).

A CPSase region spans residues 1 to 169 (MGKRLLILED…TKTAYPAPGV (169 aa)). The L-glutamine site is built by Ser46, Gly220, and Gly222. Residues 172–358 (NIVLVDFGLK…LELIDAFQLE (187 aa)) enclose the Glutamine amidotransferase type-1 domain. The active-site Nucleophile is the Cys247. Residues Met248, Gln251, Asn289, Gly291, and Tyr292 each contribute to the L-glutamine site. Residues His331 and Asp333 contribute to the active site.

Belongs to the CarA family. In terms of assembly, composed of two chains; the small (or glutamine) chain promotes the hydrolysis of glutamine to ammonia, which is used by the large (or ammonia) chain to synthesize carbamoyl phosphate. Tetramer of heterodimers (alpha,beta)4.

It catalyses the reaction hydrogencarbonate + L-glutamine + 2 ATP + H2O = carbamoyl phosphate + L-glutamate + 2 ADP + phosphate + 2 H(+). It carries out the reaction L-glutamine + H2O = L-glutamate + NH4(+). The protein operates within amino-acid biosynthesis; L-arginine biosynthesis; carbamoyl phosphate from bicarbonate: step 1/1. Its pathway is pyrimidine metabolism; UMP biosynthesis via de novo pathway; (S)-dihydroorotate from bicarbonate: step 1/3. Its function is as follows. Small subunit of the glutamine-dependent carbamoyl phosphate synthetase (CPSase). CPSase catalyzes the formation of carbamoyl phosphate from the ammonia moiety of glutamine, carbonate, and phosphate donated by ATP, constituting the first step of 2 biosynthetic pathways, one leading to arginine and/or urea and the other to pyrimidine nucleotides. The small subunit (glutamine amidotransferase) binds and cleaves glutamine to supply the large subunit with the substrate ammonia. In Streptococcus mutans serotype c (strain ATCC 700610 / UA159), this protein is Carbamoyl phosphate synthase small chain.